We begin with the raw amino-acid sequence, 223 residues long: Bone marrow proteoglycan (223 aa).

The signal sequence occupies residues 1–16; sequence MKFPLLLALLVGGASA. Residues 17–106 constitute a propeptide, acidic; it reads LHLSSETSDS…TSLMGDSGCK (90 aa). The tract at residues 20 to 81 is disordered; the sequence is SSETSDSKSP…PGDEGAVSGQ (62 aa). Residue T23 is glycosylated (O-linked (GalNAc...) threonine; partial). Residue S24 is glycosylated (O-linked (GalNAc...) serine). S66 carries an O-linked (Xyl...) (chondroitin sulfate) serine glycan. One can recognise a C-type lectin domain in the interval 124 to 223; it reads SVCRRCYRGT…VKRRPFICSY (100 aa). 2 cysteine pairs are disulfide-bonded: C126-C221 and C198-C213.

Post-translationally, nitrated.

It localises to the secreted. Cytotoxin and helminthotoxin. MBP also induces non-cytolytic histamine release from basophils. It is involved in antiparasitic defense mechanisms and immune hypersensitivity reactions. In Mus musculus (Mouse), this protein is Bone marrow proteoglycan (Prg2).